The primary structure comprises 147 residues: SsrA-binding protein (147 aa).

Belongs to the SmpB family.

Its subcellular location is the cytoplasm. Its function is as follows. Required for rescue of stalled ribosomes mediated by trans-translation. Binds to transfer-messenger RNA (tmRNA), required for stable association of tmRNA with ribosomes. tmRNA and SmpB together mimic tRNA shape, replacing the anticodon stem-loop with SmpB. tmRNA is encoded by the ssrA gene; the 2 termini fold to resemble tRNA(Ala) and it encodes a 'tag peptide', a short internal open reading frame. During trans-translation Ala-aminoacylated tmRNA acts like a tRNA, entering the A-site of stalled ribosomes, displacing the stalled mRNA. The ribosome then switches to translate the ORF on the tmRNA; the nascent peptide is terminated with the 'tag peptide' encoded by the tmRNA and targeted for degradation. The ribosome is freed to recommence translation, which seems to be the essential function of trans-translation. The sequence is that of SsrA-binding protein from Thermosipho melanesiensis (strain DSM 12029 / CIP 104789 / BI429).